A 204-amino-acid polypeptide reads, in one-letter code: Holliday junction branch migration complex subunit RuvA (204 aa).

The segment at 1 to 64 is domain I; that stretch reads MIAKLTGILD…ETDQRLIGFT (64 aa). A domain II region spans residues 65–143; sequence SAGERAWFRL…GLAGYASPVG (79 aa). Residues 144–154 form a flexible linker region; sequence PGGEAFVAPPG. A domain III region spans residues 154–204; it reads GNASADAVSALQNLGFKPAVASSAVAAAVKELGEDAGLNDLVRVALKRAAG.

This sequence belongs to the RuvA family. Homotetramer. Forms an RuvA(8)-RuvB(12)-Holliday junction (HJ) complex. HJ DNA is sandwiched between 2 RuvA tetramers; dsDNA enters through RuvA and exits via RuvB. An RuvB hexamer assembles on each DNA strand where it exits the tetramer. Each RuvB hexamer is contacted by two RuvA subunits (via domain III) on 2 adjacent RuvB subunits; this complex drives branch migration. In the full resolvosome a probable DNA-RuvA(4)-RuvB(12)-RuvC(2) complex forms which resolves the HJ.

It localises to the cytoplasm. Functionally, the RuvA-RuvB-RuvC complex processes Holliday junction (HJ) DNA during genetic recombination and DNA repair, while the RuvA-RuvB complex plays an important role in the rescue of blocked DNA replication forks via replication fork reversal (RFR). RuvA specifically binds to HJ cruciform DNA, conferring on it an open structure. The RuvB hexamer acts as an ATP-dependent pump, pulling dsDNA into and through the RuvAB complex. HJ branch migration allows RuvC to scan DNA until it finds its consensus sequence, where it cleaves and resolves the cruciform DNA. The sequence is that of Holliday junction branch migration complex subunit RuvA from Novosphingobium aromaticivorans (strain ATCC 700278 / DSM 12444 / CCUG 56034 / CIP 105152 / NBRC 16084 / F199).